A 420-amino-acid chain; its full sequence is Fasciclin-like arabinogalactan protein 8 (420 aa).

The first 25 residues, 1–25 (MAASQTFSLLAFTFSLLAFASTVSS), serve as a signal peptide directing secretion. 2 consecutive FAS1 domains span residues 26–172 (HNIT…DAPI) and 186–326 (SLSN…DNVL). Residues N27, N128, N162, N189, and N273 are each glycosylated (N-linked (GlcNAc...) asparagine). A disordered region spans residues 335 to 394 (SKSPSPAPAPEPVTAPTPSPADAPSPTAASPPAPPTDESPESAPSDSPTGSANSKSANAA). Residues 339–371 (SPAPAPEPVTAPTPSPADAPSPTAASPPAPPTD) are compositionally biased toward pro residues. Residue N392 is the site of GPI-anchor amidated asparagine attachment. Positions 393–420 (AAVGVSTPSLFTALVTIAAIAVSVSLCS) are cleaved as a propeptide — removed in mature form.

This sequence belongs to the fasciclin-like AGP family. In terms of tissue distribution, expressed mainly in flowers and to a lesser extent in leaves and roots.

It localises to the cell membrane. Its function is as follows. May be a cell surface adhesion protein. In Arabidopsis thaliana (Mouse-ear cress), this protein is Fasciclin-like arabinogalactan protein 8 (FLA8).